A 264-amino-acid polypeptide reads, in one-letter code: Na(+)-translocating NADH-quinone reductase subunit E (264 aa).

Transmembrane regions (helical) follow at residues 11–31 (VFGI…NFLG), 50–70 (MSVA…HTFI), 90–110 (FLEL…LELL), 123–143 (GIFL…LFGI), 149–169 (FIPM…AIVL), and 189–209 (MGIS…LTGI).

It belongs to the NqrDE/RnfAE family. Composed of six subunits; NqrA, NqrB, NqrC, NqrD, NqrE and NqrF.

The protein resides in the cell inner membrane. It carries out the reaction a ubiquinone + n Na(+)(in) + NADH + H(+) = a ubiquinol + n Na(+)(out) + NAD(+). In terms of biological role, NQR complex catalyzes the reduction of ubiquinone-1 to ubiquinol by two successive reactions, coupled with the transport of Na(+) ions from the cytoplasm to the periplasm. NqrA to NqrE are probably involved in the second step, the conversion of ubisemiquinone to ubiquinol. The chain is Na(+)-translocating NADH-quinone reductase subunit E from Chlamydia caviae (strain ATCC VR-813 / DSM 19441 / 03DC25 / GPIC) (Chlamydophila caviae).